Here is a 455-residue protein sequence, read N- to C-terminus: Bifunctional protein GlmU (455 aa).

A pyrophosphorylase region spans residues 1–228 (MTQPLHVIIL…AQEAEGANDP (228 aa)). UDP-N-acetyl-alpha-D-glucosamine is bound by residues 10-13 (LAAG), lysine 24, glutamine 76, 81-82 (GT), 103-105 (YGD), glycine 138, glutamate 153, asparagine 168, and asparagine 226. Aspartate 105 is a Mg(2+) binding site. Asparagine 226 is a binding site for Mg(2+). The segment at 229–249 (WQLSQLERAWQRRAVRALCAQ) is linker. An N-acetyltransferase region spans residues 250–455 (GARVRDPARL…DGWKRPLKKS (206 aa)). Residues arginine 332 and lysine 350 each coordinate UDP-N-acetyl-alpha-D-glucosamine. Histidine 362 (proton acceptor) is an active-site residue. Residues tyrosine 365 and asparagine 376 each coordinate UDP-N-acetyl-alpha-D-glucosamine. Acetyl-CoA is bound by residues alanine 379, 385–386 (NY), serine 404, alanine 422, and arginine 439.

It in the N-terminal section; belongs to the N-acetylglucosamine-1-phosphate uridyltransferase family. The protein in the C-terminal section; belongs to the transferase hexapeptide repeat family. Homotrimer. Mg(2+) is required as a cofactor.

The protein resides in the cytoplasm. The enzyme catalyses alpha-D-glucosamine 1-phosphate + acetyl-CoA = N-acetyl-alpha-D-glucosamine 1-phosphate + CoA + H(+). It carries out the reaction N-acetyl-alpha-D-glucosamine 1-phosphate + UTP + H(+) = UDP-N-acetyl-alpha-D-glucosamine + diphosphate. It participates in nucleotide-sugar biosynthesis; UDP-N-acetyl-alpha-D-glucosamine biosynthesis; N-acetyl-alpha-D-glucosamine 1-phosphate from alpha-D-glucosamine 6-phosphate (route II): step 2/2. Its pathway is nucleotide-sugar biosynthesis; UDP-N-acetyl-alpha-D-glucosamine biosynthesis; UDP-N-acetyl-alpha-D-glucosamine from N-acetyl-alpha-D-glucosamine 1-phosphate: step 1/1. It functions in the pathway bacterial outer membrane biogenesis; LPS lipid A biosynthesis. Functionally, catalyzes the last two sequential reactions in the de novo biosynthetic pathway for UDP-N-acetylglucosamine (UDP-GlcNAc). The C-terminal domain catalyzes the transfer of acetyl group from acetyl coenzyme A to glucosamine-1-phosphate (GlcN-1-P) to produce N-acetylglucosamine-1-phosphate (GlcNAc-1-P), which is converted into UDP-GlcNAc by the transfer of uridine 5-monophosphate (from uridine 5-triphosphate), a reaction catalyzed by the N-terminal domain. The protein is Bifunctional protein GlmU of Stenotrophomonas maltophilia (strain K279a).